The following is a 435-amino-acid chain: Light-independent protochlorophyllide reductase subunit N (435 aa).

Residues C23, C48, and C108 each contribute to the [4Fe-4S] cluster site.

This sequence belongs to the BchN/ChlN family. As to quaternary structure, protochlorophyllide reductase is composed of three subunits; ChlL, ChlN and ChlB. Forms a heterotetramer of two ChlB and two ChlN subunits. It depends on [4Fe-4S] cluster as a cofactor.

It is found in the plastid. The protein resides in the chloroplast. The enzyme catalyses chlorophyllide a + oxidized 2[4Fe-4S]-[ferredoxin] + 2 ADP + 2 phosphate = protochlorophyllide a + reduced 2[4Fe-4S]-[ferredoxin] + 2 ATP + 2 H2O. It functions in the pathway porphyrin-containing compound metabolism; chlorophyll biosynthesis (light-independent). In terms of biological role, component of the dark-operative protochlorophyllide reductase (DPOR) that uses Mg-ATP and reduced ferredoxin to reduce ring D of protochlorophyllide (Pchlide) to form chlorophyllide a (Chlide). This reaction is light-independent. The NB-protein (ChlN-ChlB) is the catalytic component of the complex. The protein is Light-independent protochlorophyllide reductase subunit N of Chlorella vulgaris (Green alga).